The following is a 257-amino-acid chain: Imidazole glycerol phosphate synthase subunit HisF (257 aa).

Residues Asp11 and Asp130 contribute to the active site.

It belongs to the HisA/HisF family. Heterodimer of HisH and HisF.

It is found in the cytoplasm. The enzyme catalyses 5-[(5-phospho-1-deoxy-D-ribulos-1-ylimino)methylamino]-1-(5-phospho-beta-D-ribosyl)imidazole-4-carboxamide + L-glutamine = D-erythro-1-(imidazol-4-yl)glycerol 3-phosphate + 5-amino-1-(5-phospho-beta-D-ribosyl)imidazole-4-carboxamide + L-glutamate + H(+). It functions in the pathway amino-acid biosynthesis; L-histidine biosynthesis; L-histidine from 5-phospho-alpha-D-ribose 1-diphosphate: step 5/9. Its function is as follows. IGPS catalyzes the conversion of PRFAR and glutamine to IGP, AICAR and glutamate. The HisF subunit catalyzes the cyclization activity that produces IGP and AICAR from PRFAR using the ammonia provided by the HisH subunit. The sequence is that of Imidazole glycerol phosphate synthase subunit HisF from Francisella philomiragia subsp. philomiragia (strain ATCC 25017 / CCUG 19701 / FSC 153 / O#319-036).